Here is a 345-residue protein sequence, read N- to C-terminus: Phosphoribosylformylglycinamidine cyclo-ligase (345 aa).

The protein belongs to the AIR synthase family.

Its subcellular location is the cytoplasm. The catalysed reaction is 2-formamido-N(1)-(5-O-phospho-beta-D-ribosyl)acetamidine + ATP = 5-amino-1-(5-phospho-beta-D-ribosyl)imidazole + ADP + phosphate + H(+). It functions in the pathway purine metabolism; IMP biosynthesis via de novo pathway; 5-amino-1-(5-phospho-D-ribosyl)imidazole from N(2)-formyl-N(1)-(5-phospho-D-ribosyl)glycinamide: step 2/2. In Anaeromyxobacter dehalogenans (strain 2CP-1 / ATCC BAA-258), this protein is Phosphoribosylformylglycinamidine cyclo-ligase.